The chain runs to 312 residues: Glyoxylate/hydroxypyruvate reductase A (312 aa).

The active site involves arginine 227. Catalysis depends on histidine 275, which acts as the Proton donor.

The protein belongs to the D-isomer specific 2-hydroxyacid dehydrogenase family. GhrA subfamily.

It localises to the cytoplasm. The catalysed reaction is glycolate + NADP(+) = glyoxylate + NADPH + H(+). The enzyme catalyses (R)-glycerate + NAD(+) = 3-hydroxypyruvate + NADH + H(+). It carries out the reaction (R)-glycerate + NADP(+) = 3-hydroxypyruvate + NADPH + H(+). In terms of biological role, catalyzes the NADPH-dependent reduction of glyoxylate and hydroxypyruvate into glycolate and glycerate, respectively. The sequence is that of Glyoxylate/hydroxypyruvate reductase A from Escherichia coli O7:K1 (strain IAI39 / ExPEC).